Reading from the N-terminus, the 323-residue chain is Glucokinase (323 aa).

8–13 is a binding site for ATP; that stretch reads GDVGGT.

It belongs to the bacterial glucokinase family.

The protein localises to the cytoplasm. The enzyme catalyses D-glucose + ATP = D-glucose 6-phosphate + ADP + H(+). The sequence is that of Glucokinase from Yersinia pseudotuberculosis serotype I (strain IP32953).